An 825-amino-acid chain; its full sequence is MATQNDIPNSTPEDLAKQVEIAEKHPDPPAMPSRLPDSLKTLEAKIDTSKITDEEVANVHRFQRACDYLAASLIFLSNGLYTGGDLEEKDIKTRLLGHWGTCPGLSIVYSHCNRIINKYDLNMLFVVGPGHGAPAILSALFLEDSLGPFYPRYQFTKEGLNNLINTFSLPGGFPSHVNAEVPGAIHEGGELGYALSVSYGAVLDRPDLIVTCVVGDGEAETGPTATSWHAHKFLDPAESGAVIPVLELNGYKISERTIYGCMDDSELLSLFSGFGYEVAIVNDTPDQNRVMAATMDWAVERIHDIQHRARVNREEIKPRWPMIILRTPKGKGCPKYLNGKFLEGTFRAHQVPLKLARTDTNQRNLLKDWLNSYNCQDFLDEHGLPTKGITEHLPPREKRMGQRHETYNSYLPLKVPDWKKYGVKKGETTSATSVVGQYLDELLVTNDSTLRIFSPDELESNKLDGALKHSYRTMQTDPELMAKRGRVTEVLSEHLCQGFMQGYTLTGRTAIFPSYEAFMTIVVSMLVQYSKFLKMGLETGWHGKFGSLNYVTSSTWARQEHNGFSHQSPRFITTMLSLKPGVSRVYFPPDANCFLATVARCMKSENTINLMVSSKNPQPAYLSVEEAEHHCKAGASVWKFASTDNGENPDVVIAGVGNEIMFEVVKAAEMLQNDIPELRVRVINVTDLMVLSSLHPHGMNPAEFDSLFTKDRHVHFNYHGYVMDLKALLFDRIQGTRVTMEGYREEGTTTTPFNMMMCNNTSRYHVARMALQHALHNPTVAVNCNMLCAKYAWKLEEIENYIMENKDDPPEIYAAPVFKNKTSTL.

The protein belongs to the XFP family. The cofactor is thiamine diphosphate.

The chain is Probable phosphoketolase from Schizosaccharomyces pombe (strain 972 / ATCC 24843) (Fission yeast).